An 89-amino-acid chain; its full sequence is Cell division protein FtsL (89 aa).

Topologically, residues 1 to 22 (MIDRKHYHLVGSIGKDILNNGK) are cytoplasmic. The chain crosses the membrane as a helical span at residues 23 to 40 (LPALLLIAVLASSSLVVI). Residues 41 to 89 (TTYQTRRLTVEREQLLLEQNILDIEWRNLILEDNVISDQSRFEFVATEQ) are Periplasmic-facing.

The protein belongs to the FtsL family. As to quaternary structure, part of a complex composed of FtsB, FtsL and FtsQ.

It is found in the cell inner membrane. Functionally, essential cell division protein. May link together the upstream cell division proteins, which are predominantly cytoplasmic, with the downstream cell division proteins, which are predominantly periplasmic. This Moranella endobia (strain PCIT) protein is Cell division protein FtsL.